The sequence spans 45 residues: Bacteriocin fulvocin-C (45 aa).

In terms of biological role, bacteriocin. This Myxococcus fulvus protein is Bacteriocin fulvocin-C.